The chain runs to 359 residues: Protein Wnt-8a (359 aa).

A signal peptide spans 1-25; the sequence is MNPCQIFASLVMSICCHILSSTAWS. A disulfide bond links Cys-55 and Cys-66. Asn-104 carries N-linked (GlcNAc...) asparagine glycosylation. Cystine bridges form between Cys-105/Cys-113, Cys-115/Cys-133, Cys-181/Cys-195, Cys-183/Cys-190, Cys-260/Cys-298, Cys-276/Cys-291, Cys-295/Cys-337, Cys-313/Cys-328, Cys-315/Cys-325, and Cys-320/Cys-321. Ser-187 is lipidated: O-palmitoleoyl serine. Asn-263 and Asn-282 each carry an N-linked (GlcNAc...) asparagine glycan. N-linked (GlcNAc...) asparagine glycosylation is present at Asn-348.

This sequence belongs to the Wnt family. Palmitoleoylation is required for efficient binding to frizzled receptors. Depalmitoleoylation leads to Wnt signaling pathway inhibition. In terms of processing, proteolytic processing by tiki1 and tiki2 promotes oxidation and formation of large disulfide-bond oligomers, leading to inactivation of wnt8. In terms of tissue distribution, expressed in the margin of the pregastrula embryo destined to be the future mesoderm.

It localises to the secreted. The protein localises to the extracellular space. It is found in the extracellular matrix. Ligand for members of the frizzled family of seven transmembrane receptors. Required for mesoderm and neural ectoderm patterning during gastrulation. Involved in axis formation during embryonic development, via activation of canonical Wnt/CTNNB1 signaling. May be involved in the specification of the spatial patterns of expression of Gsc and other regulatory genes leading to the establishment of the embryonic axis. This Danio rerio (Zebrafish) protein is Protein Wnt-8a (wnt8a).